The following is a 416-amino-acid chain: Serine hydroxymethyltransferase (416 aa).

(6S)-5,6,7,8-tetrahydrofolate is bound by residues leucine 118 and glycine 122 to leucine 124. Residue lysine 226 is modified to N6-(pyridoxal phosphate)lysine. (6S)-5,6,7,8-tetrahydrofolate is bound by residues glutamate 242 and serine 350–phenylalanine 352.

It belongs to the SHMT family. In terms of assembly, homodimer. Requires pyridoxal 5'-phosphate as cofactor.

Its subcellular location is the cytoplasm. The enzyme catalyses (6R)-5,10-methylene-5,6,7,8-tetrahydrofolate + glycine + H2O = (6S)-5,6,7,8-tetrahydrofolate + L-serine. It functions in the pathway one-carbon metabolism; tetrahydrofolate interconversion. The protein operates within amino-acid biosynthesis; glycine biosynthesis; glycine from L-serine: step 1/1. Its function is as follows. Catalyzes the reversible interconversion of serine and glycine with tetrahydrofolate (THF) serving as the one-carbon carrier. This reaction serves as the major source of one-carbon groups required for the biosynthesis of purines, thymidylate, methionine, and other important biomolecules. Also exhibits THF-independent aldolase activity toward beta-hydroxyamino acids, producing glycine and aldehydes, via a retro-aldol mechanism. This chain is Serine hydroxymethyltransferase, found in Wolinella succinogenes (strain ATCC 29543 / DSM 1740 / CCUG 13145 / JCM 31913 / LMG 7466 / NCTC 11488 / FDC 602W) (Vibrio succinogenes).